We begin with the raw amino-acid sequence, 182 residues long: Type-1 fimbrial protein, A chain (182 aa).

An N-terminal signal peptide occupies residues 1–23; sequence MKIKTLAIVVLSALSLSSTAALA. Cys-44 and Cys-84 form a disulfide bridge.

This sequence belongs to the fimbrial protein family.

Its subcellular location is the fimbrium. In terms of biological role, fimbriae (also called pili), polar filaments radiating from the surface of the bacterium to a length of 0.5-1.5 micrometers and numbering 100-300 per cell, enable bacteria to colonize the epithelium of specific host organs. In Escherichia coli (strain K12), this protein is Type-1 fimbrial protein, A chain (fimA).